The chain runs to 96 residues: Maintenance of carboxysome distribution protein B (96 aa).

Residues 1-18 show a composition bias toward basic and acidic residues; the sequence is MTNLEDKLSASIKTENKD. Residues 1–96 form a disordered region; it reads MTNLEDKLSA…STHPRRVWPD (96 aa). Over residues 59–74 the composition is skewed to low complexity; the sequence is ARATTTKPAVSKSSKP.

In terms of assembly, monomer, associates with McdA:DNA. Interacts with shell components of the carboxysome.

The protein resides in the carboxysome. McdA and McdB together mediate carboxysome positioning on the nucleoid and to prevent their aggregation in the cell. Undergoes liquid-liquid phase separation at pH 7.0 in the presence of crowders polyethylene glycol or Ficoll. McdA is an ATPase that forms dynamic gradients on the nucleoid in response to adapter protein McdB, which associates with carboxysomes. The interplay between McdA gradients on the nucleoid and McdB-bound carboxysomes result in the equal spacing of Cbs along the cell length. Stimulates the ATPase activity of McdA, causing McdA to be released from DNA. Functionally, incorrect positioning (aggregation) of carboxysomes results in reduced CO(2) fixation by encapsulated form 1 ribulose-1,5-bisphosphate carboxylase (RuBisCO, cbbL/cbbS), which leads to slower growth. The protein is Maintenance of carboxysome distribution protein B of Halothiobacillus neapolitanus (strain ATCC 23641 / c2) (Thiobacillus neapolitanus).